Here is a 356-residue protein sequence, read N- to C-terminus: S-adenosylmethionine:tRNA ribosyltransferase-isomerase (356 aa).

Belongs to the QueA family. In terms of assembly, monomer.

Its subcellular location is the cytoplasm. It catalyses the reaction 7-aminomethyl-7-carbaguanosine(34) in tRNA + S-adenosyl-L-methionine = epoxyqueuosine(34) in tRNA + adenine + L-methionine + 2 H(+). Its pathway is tRNA modification; tRNA-queuosine biosynthesis. Functionally, transfers and isomerizes the ribose moiety from AdoMet to the 7-aminomethyl group of 7-deazaguanine (preQ1-tRNA) to give epoxyqueuosine (oQ-tRNA). The sequence is that of S-adenosylmethionine:tRNA ribosyltransferase-isomerase from Xanthomonas campestris pv. campestris (strain B100).